The following is a 51-amino-acid chain: Large ribosomal subunit protein bL33 (51 aa).

Belongs to the bacterial ribosomal protein bL33 family.

In Psychrobacter sp. (strain PRwf-1), this protein is Large ribosomal subunit protein bL33.